The primary structure comprises 91 residues: MTSQWKCPAKDQSLRNIQRNRRRLGDSGLPATVVRCSKSGATRRNPAVNDASQCSSIVSTVRIGGKDGRHQPKLQSRVLIFELEDKSLSTE.

The protein resides in the nucleus. Functionally, transcription factor; part of the gene cluster 27 that mediates the biosynthesis of asparasone A, a sclerotium-specific anthraquinone pigment important for sclerotial survival. Controls the expression of the non-reducing polyketide synthase (NRPKS) pks27. The sequence is that of Transcription factor znf27 from Aspergillus flavus (strain ATCC 200026 / FGSC A1120 / IAM 13836 / NRRL 3357 / JCM 12722 / SRRC 167).